The chain runs to 223 residues: MSTELVEDETQFYGKAQNYWKNVPATVDGMLGGYGHISNTDLNSSKKFLQRFLREGSQKTGNTCALDCGAGIGRITKRLLLPLFKTVDMVDVTDEFLNKAKSYLGEEGKRVGKYFCCGLQEFSPEPSRYDVIWIQWVIGHLTDEHLVSFLQRCKLGLRPNGIILIKDNVTQDGSIMDDADSSICRDIDLVRKLIKQAGLSVLAIERQENFPDEIYQVFSFAMR.

S-adenosyl-L-methionine contacts are provided by residues Gly-69, Arg-74, 91-93 (DVT), 119-120 (LQ), and Gln-135.

The protein belongs to the methyltransferase superfamily. NTM1 family.

The protein localises to the nucleus. It catalyses the reaction N-terminal L-alanyl-L-prolyl-L-lysyl-[protein] + 3 S-adenosyl-L-methionine = N-terminal N,N,N-trimethyl-L-alanyl-L-prolyl-L-lysyl-[protein] + 3 S-adenosyl-L-homocysteine + 3 H(+). It carries out the reaction N-terminal L-seryl-L-prolyl-L-lysyl-[protein] + 3 S-adenosyl-L-methionine = N-terminal N,N,N-trimethyl-L-seryl-L-prolyl-L-lysyl-[protein] + 3 S-adenosyl-L-homocysteine + 3 H(+). The catalysed reaction is N-terminal L-prolyl-L-prolyl-L-lysyl-[protein] + 2 S-adenosyl-L-methionine = N-terminal N,N-dimethyl-L-prolyl-L-prolyl-L-lysyl-[protein] + 2 S-adenosyl-L-homocysteine + 2 H(+). Functionally, distributive alpha-N-methyltransferase that methylates the N-terminus of target proteins containing the N-terminal motif [Ala/Gly/Pro/Ser]-Pro-Lys when the initiator Met is cleaved. Specifically catalyzes mono-, di- or tri-methylation of the exposed alpha-amino group of the Ala, Gly or Ser residue in the [Ala/Gly/Ser]-Pro-Lys motif and mono- or di-methylation of Pro in the Pro-Pro-Lys motif. Required during mitosis for normal bipolar spindle formation and chromosome segregation via its action on target proteins. The sequence is that of N-terminal Xaa-Pro-Lys N-methyltransferase 1-B (ntmt1-b) from Xenopus laevis (African clawed frog).